Reading from the N-terminus, the 570-residue chain is Berberine bridge enzyme-like 19 (570 aa).

A signal peptide spans 1–30 (MLTTPPRTFVSVPFFFFFLLFLSLPLSSFS). A disulfide bridge connects residues Cys42 and Cys105. Asn80 carries an N-linked (GlcNAc...) asparagine glycan. The FAD-binding PCMH-type domain occupies 83–257 (STLKPTIIIT…LGYKVKLVPV (175 aa)). The segment at residues 120 to 182 (HDYDGLSYIS…RVHGFPAGVC (63 aa)) is a cross-link (6-(S-cysteinyl)-8alpha-(pros-histidyl)-FAD (His-Cys)). Asn341 and Asn359 each carry an N-linked (GlcNAc...) asparagine glycan.

This sequence belongs to the oxygen-dependent FAD-linked oxidoreductase family. FAD serves as cofactor. Post-translationally, the FAD cofactor is bound via a bicovalent 6-S-cysteinyl, 8alpha-N1-histidyl FAD linkage.

The protein localises to the secreted. The protein resides in the cell wall. This Arabidopsis thaliana (Mouse-ear cress) protein is Berberine bridge enzyme-like 19.